The chain runs to 489 residues: Ammonium transporter MEP3 (489 aa).

The Extracellular segment spans residues 1–17; it reads MARGDGHLWTETYDSST. A helical transmembrane segment spans residues 18–38; the sequence is VAFMILGAALVFFMVPGLGFL. Residues 39 to 48 are Cytoplasmic-facing; sequence YSGLARRKSA. A helical transmembrane segment spans residues 49–69; that stretch reads LALIWVVIMATLVGILQWYFW. Topologically, residues 70–108 are extracellular; it reads GYSLAFSKTATNNKFIGNLDSFGFRNVYGKISDDSTYPE. Residues 109–129 traverse the membrane as a helical segment; the sequence is LIYAIFQMMFMCVALSIIAGA. Residues 130–139 lie on the Cytoplasmic side of the membrane; sequence TAERGKLFPH. The chain crosses the membrane as a helical span at residues 140–160; the sequence is MVFLFVFATLVYCPITYWIWA. Topologically, residues 161 to 173 are extracellular; sequence PGGWAYQWGVLDW. A helical membrane pass occupies residues 174–194; sequence AGGGNIEILSAVAGFVYSYFL. Residues 195–209 lie on the Cytoplasmic side of the membrane; that stretch reads GRRKENLLINFRPHN. A helical membrane pass occupies residues 210–230; sequence VSMVTLGTSILWFGWLLFNAA. Residues 231-239 are Extracellular-facing; it reads SSLSPNMRS. The chain crosses the membrane as a helical span at residues 240–260; sequence VYAFMNTCLSATTGGMTWCLL. Topologically, residues 261 to 267 are cytoplasmic; sequence DYRSEKK. The chain crosses the membrane as a helical span at residues 268–288; sequence WSTVGLCSGIICGLVAATPSS. A topological domain (extracellular) is located at residue glycine 289. Residues 290–310 traverse the membrane as a helical segment; that stretch reads CITLYGSLIQGIIAGVVCNFA. Topologically, residues 311–330 are cytoplasmic; the sequence is TKIKYYLKVDDSLDLLAEHG. Residues 331-351 form a helical membrane-spanning segment; sequence IAGVVGLIFNALFAADWVIGM. The Extracellular portion of the chain corresponds to 352 to 372; it reads DGTTKHKGGWLTHNWKQMYIQ. The chain crosses the membrane as a helical span at residues 373 to 393; sequence IAYIGASAGYCAVVTAIICFV. The Cytoplasmic segment spans residues 394 to 489; it reads LGKIPGVHLR…NPKLHHAKEA (96 aa). A compositionally biased stretch (polar residues) spans 448-481; sequence GANSASETNPTEDSQNSSLSSATVSGQNEKSNNP. The segment at 448 to 489 is disordered; the sequence is GANSASETNPTEDSQNSSLSSATVSGQNEKSNNPKLHHAKEA.

Belongs to the ammonia transporter channel (TC 1.A.11.2) family.

The protein resides in the membrane. Transporter for ammonium (both charged and uncharged NH3 and NH4) to use as a nitrogen source. The affinity of MEP2 is about twenty times higher than that of MEP1. MEP3 has the lowest affinity. This chain is Ammonium transporter MEP3 (MEP3), found in Saccharomyces cerevisiae (strain ATCC 204508 / S288c) (Baker's yeast).